We begin with the raw amino-acid sequence, 611 residues long: RAC serine/threonine-protein kinase (611 aa).

Over residues 14–25 (VVASAPAPGSAS) the composition is skewed to low complexity. Disordered regions lie at residues 14–33 (VVASAPAPGSASRIPESPTT) and 45–88 (QSTH…NTTF). S30 carries the post-translational modification Phosphoserine. The region spanning 106-211 (QVVKEGWLMK…WTEAIRNVSS (106 aa)) is the PH domain. One can recognise a Protein kinase domain in the interval 266–523 (FEFLKVLGKG…VKEIQAHPFF (258 aa)). ATP-binding positions include 272-280 (LGKGTFGKV) and K295. Residue D389 is the Proton acceptor of the active site. Residues 524–597 (ASINWTDLVL…QGDMASTLGT (74 aa)) enclose the AGC-kinase C-terminal domain. Position 586 is a phosphoserine (S586).

The protein belongs to the protein kinase superfamily. AGC Ser/Thr protein kinase family. RAC subfamily. In terms of assembly, interacts with trbl. Phosphorylated and activated by Pk61C/PDK1. Phosphorylated on Ser-586 by the TORC2 complex. In terms of tissue distribution, ubiquitously expressed. Present in ovary, where it is concentrated at the basal side of follicle cells.

It localises to the cytoplasm. The protein resides in the cytosol. The protein localises to the cell membrane. The enzyme catalyses L-seryl-[protein] + ATP = O-phospho-L-seryl-[protein] + ADP + H(+). It carries out the reaction L-threonyl-[protein] + ATP = O-phospho-L-threonyl-[protein] + ADP + H(+). Serine/threonine kinase involved in various developmental processes. During early embryogenesis, acts as a survival protein. During mid-embryogenesis, phosphorylates and activates trh, a transcription factor required for tracheal cell fate determination. Also regulates tracheal cell migration. Later in development, acts downstream of PI3K and Pk61C/PDK1 in the insulin receptor transduction pathway which regulates cell growth and organ size, by phosphorylating and antagonizing FOXO transcription factor. Controls follicle cell size during oogenesis. May also stimulate cell growth by phosphorylating Gig/Tsc2 and inactivating the Tsc complex. Dephosphorylation of 'Ser-586' by Phlpp triggers apoptosis and suppression of tumor growth. The protein is RAC serine/threonine-protein kinase of Drosophila melanogaster (Fruit fly).